Here is a 157-residue protein sequence, read N- to C-terminus: Vitamin K-dependent protein C (157 aa).

Residues 1 to 157 (ENGEVDLDIQ…GCGRLHNYGV (157 aa)) form the Peptidase S1 domain. Residue N17 is glycosylated (N-linked (GlcNAc...) asparagine). D26 functions as the Charge relay system in the catalytic mechanism. A glycan (N-linked (GlcNAc...) asparagine) is linked at N78. 2 disulfide bridges follow: C96-C110 and C121-C149. The active-site Charge relay system is the S125.

This sequence belongs to the peptidase S1 family. As to expression, plasma; synthesized in the liver.

The protein localises to the secreted. Its subcellular location is the golgi apparatus. It is found in the endoplasmic reticulum. It catalyses the reaction Degradation of blood coagulation factors Va and VIIIa.. Functionally, protein C is a vitamin K-dependent serine protease that regulates blood coagulation by inactivating factors Va and VIIIa in the presence of calcium ions and phospholipids. Exerts a protective effect on the endothelial cell barrier function. This chain is Vitamin K-dependent protein C (PROC), found in Equus caballus (Horse).